The primary structure comprises 239 residues: Apoptosis regulator Bcl-2 (239 aa).

The BH4 signature appears at 10–30 (DNREIVMKYIHYKLSQRGYEW). The segment at 39 to 85 (PPGAAPAPGIFSSQPGHTPHPAASRDPVARTSPLQTPAAPGAAAGPA) is disordered. T69 carries the phosphothreonine; by MAPK8 modification. S70 carries the phosphoserine; by MAPK8 and PKC modification. A compositionally biased stretch (low complexity) spans 75–85 (PAAPGAAAGPA). S87 carries the phosphoserine; by MAPK8 modification. The tract at residues 92-107 (VVHLTLRQAGDDFSRR) is required for interaction with SEPTIN4 isoform ARTS. Required XIAP-mediated ubiquitination and apoptosis. A BH3 motif is present at residues 93–107 (VHLTLRQAGDDFSRR). A BH1 motif is present at residues 136 to 155 (ELFRDGVNWGRIVAFFEFGG). A BH2 motif is present at residues 187 to 202 (TWIQDNGGWDAFVELY). Residues 212 to 233 (FSWLSLKTLLSLALVGACITLG) form a helical membrane-spanning segment.

Belongs to the Bcl-2 family. In terms of assembly, forms homodimers, and heterodimers with BAX, BAD, BAK and Bcl-X(L). Heterodimerization with BAX requires intact BH1 and BH2 motifs, and is necessary for anti-apoptotic activity. Part of a complex composed of SEPTIN4 isoform ARTS, XIAP and BCL2, within the complex interacts (via BH3 domain) with SEPTIN4 isoform ARTS and XIAP, SEPTIN4 isoform ARTS acts as a scaffold protein and stabilizes the complex. Component of the complex, at least composed of LRPPRC, BECN1 and BCL2; the interactions prevent BECN1 from forming an autophagy-inducing complex with PIK3C3. Interacts with EI24. Also interacts with APAF1, BBC3, BCL2L1, BNIPL, MRPL41 and TP53BP2. Binding to FKBP8 seems to target BCL2 to the mitochondria and probably interferes with the binding of BCL2 to its targets. Interacts with BAG1 in an ATP-dependent manner. Interacts with RAF1 (the 'Ser-338' and 'Ser-339' phosphorylated form). Interacts (via the BH4 domain) with EGLN3; the interaction prevents the formation of the BAX-BCL2 complex and inhibits the anti-apoptotic activity of BCL2. Interacts with G0S2; this interaction also prevents the formation of the anti-apoptotic BAX-BCL2 complex. Interacts with RTL10/BOP. Interacts with the SCF(FBXO10) complex. Interacts (via the loop between motifs BH4 and BH3) with NLRP1 (via LRR repeats), but not with NLRP2, NLRP3, NLRP4, PYCARD, nor MEFV. Interacts with GIMAP3/IAN4, GIMAP4/IAN1 and GIMAP5/IAN5. Interacts with BCAP31. Interacts with IRF3; the interaction is inhibited by Sendai virus infection. Interacts with BECN1; thereby inhibiting autophagy in non-starvation conditions. Interacts with AMBRA1; thereby inhibiting autophagy. As to quaternary structure, (Microbial infection) Interacts with Toxoplasma gondii ROP17; the interaction probably promotes BCL2 phosphorylation and degradation. Post-translationally, phosphorylation/dephosphorylation on Ser-70 regulates anti-apoptotic activity. Growth factor-stimulated phosphorylation on Ser-70 by PKC is required for the anti-apoptosis activity and occurs during the G2/M phase of the cell cycle. In the absence of growth factors, BCL2 appears to be phosphorylated by other protein kinases such as ERKs and stress-activated kinases. Phosphorylated by MAPK8/JNK1 at Thr-69, Ser-70 and Ser-87, which stimulates starvation-induced autophagy. Dephosphorylated by protein phosphatase 2A (PP2A). Proteolytically cleaved by caspases during apoptosis. The cleaved protein, lacking the BH4 motif, has pro-apoptotic activity, causes the release of cytochrome c into the cytosol promoting further caspase activity. In terms of processing, monoubiquitinated by PRKN, leading to an increase in its stability. Ubiquitinated by SCF(FBXO10), leading to its degradation by the proteasome. Ubiquitinated by XIAP, leading to its degradation by the proteasome. Expressed in a variety of tissues.

The protein resides in the mitochondrion outer membrane. It is found in the nucleus membrane. Its subcellular location is the endoplasmic reticulum membrane. It localises to the cytoplasm. In terms of biological role, suppresses apoptosis in a variety of cell systems including factor-dependent lymphohematopoietic and neural cells. Regulates cell death by controlling the mitochondrial membrane permeability. Appears to function in a feedback loop system with caspases. Inhibits caspase activity either by preventing the release of cytochrome c from the mitochondria and/or by binding to the apoptosis-activating factor (APAF-1). Also acts as an inhibitor of autophagy: interacts with BECN1 and AMBRA1 during non-starvation conditions and inhibits their autophagy function. May attenuate inflammation by impairing NLRP1-inflammasome activation, hence CASP1 activation and IL1B release. This is Apoptosis regulator Bcl-2 (BCL2) from Homo sapiens (Human).